The chain runs to 290 residues: Phosphatidylglycerol--prolipoprotein diacylglyceryl transferase (290 aa).

7 helical membrane-spanning segments follow: residues 21–41 (VSLH…MWLA), 60–80 (LLYA…VLFY), 96–116 (WDGG…MLWF), 124–144 (FFQV…AGRL), 199–219 (SQLY…NLFI), 226–246 (GSVS…VECF), and 259–279 (VISM…IMMI). Residue arginine 143 participates in a 1,2-diacyl-sn-glycero-3-phospho-(1'-sn-glycerol) binding.

Belongs to the Lgt family.

Its subcellular location is the cell inner membrane. It carries out the reaction L-cysteinyl-[prolipoprotein] + a 1,2-diacyl-sn-glycero-3-phospho-(1'-sn-glycerol) = an S-1,2-diacyl-sn-glyceryl-L-cysteinyl-[prolipoprotein] + sn-glycerol 1-phosphate + H(+). It functions in the pathway protein modification; lipoprotein biosynthesis (diacylglyceryl transfer). In terms of biological role, catalyzes the transfer of the diacylglyceryl group from phosphatidylglycerol to the sulfhydryl group of the N-terminal cysteine of a prolipoprotein, the first step in the formation of mature lipoproteins. This chain is Phosphatidylglycerol--prolipoprotein diacylglyceryl transferase, found in Yersinia enterocolitica serotype O:8 / biotype 1B (strain NCTC 13174 / 8081).